A 331-amino-acid polypeptide reads, in one-letter code: Ketol-acid reductoisomerase (NADP(+)) (331 aa).

The KARI N-terminal Rossmann domain maps to 2–182; that stretch reads ARMYYDADAN…GGTRGGILET (181 aa). NADP(+)-binding positions include 25–28, S51, S53, and 83–86; these read YGSQ and DDVQ. The active site involves H108. G134 lines the NADP(+) pocket. The region spanning 183–328 is the KARI C-terminal knotted domain; it reads TFREETETDL…KDLRAMFSWL (146 aa). The Mg(2+) site is built by D191, E195, E227, and E231. Substrate is bound at residue S252.

It belongs to the ketol-acid reductoisomerase family. Requires Mg(2+) as cofactor.

The catalysed reaction is (2R)-2,3-dihydroxy-3-methylbutanoate + NADP(+) = (2S)-2-acetolactate + NADPH + H(+). It catalyses the reaction (2R,3R)-2,3-dihydroxy-3-methylpentanoate + NADP(+) = (S)-2-ethyl-2-hydroxy-3-oxobutanoate + NADPH + H(+). It participates in amino-acid biosynthesis; L-isoleucine biosynthesis; L-isoleucine from 2-oxobutanoate: step 2/4. The protein operates within amino-acid biosynthesis; L-valine biosynthesis; L-valine from pyruvate: step 2/4. Involved in the biosynthesis of branched-chain amino acids (BCAA). Catalyzes an alkyl-migration followed by a ketol-acid reduction of (S)-2-acetolactate (S2AL) to yield (R)-2,3-dihydroxy-isovalerate. In the isomerase reaction, S2AL is rearranged via a Mg-dependent methyl migration to produce 3-hydroxy-3-methyl-2-ketobutyrate (HMKB). In the reductase reaction, this 2-ketoacid undergoes a metal-dependent reduction by NADPH to yield (R)-2,3-dihydroxy-isovalerate. In Picosynechococcus sp. (strain ATCC 27264 / PCC 7002 / PR-6) (Agmenellum quadruplicatum), this protein is Ketol-acid reductoisomerase (NADP(+)).